Consider the following 395-residue polypeptide: N5-carboxyaminoimidazole ribonucleotide synthase (395 aa).

Residues Lys-109, Lys-149, 184-187 (EEFI), Glu-192, and 268-269 (NE) each bind ATP. In terms of domain architecture, ATP-grasp spans 113-298 (RQLLTRLGLP…QFEQQLRAIA (186 aa)).

It belongs to the PurK/PurT family. As to quaternary structure, homodimer.

It catalyses the reaction 5-amino-1-(5-phospho-beta-D-ribosyl)imidazole + hydrogencarbonate + ATP = 5-carboxyamino-1-(5-phospho-D-ribosyl)imidazole + ADP + phosphate + 2 H(+). The protein operates within purine metabolism; IMP biosynthesis via de novo pathway; 5-amino-1-(5-phospho-D-ribosyl)imidazole-4-carboxylate from 5-amino-1-(5-phospho-D-ribosyl)imidazole (N5-CAIR route): step 1/2. Functionally, catalyzes the ATP-dependent conversion of 5-aminoimidazole ribonucleotide (AIR) and HCO(3)(-) to N5-carboxyaminoimidazole ribonucleotide (N5-CAIR). This Synechococcus elongatus (strain ATCC 33912 / PCC 7942 / FACHB-805) (Anacystis nidulans R2) protein is N5-carboxyaminoimidazole ribonucleotide synthase.